The sequence spans 245 residues: RAD51-like protein 1 (245 aa).

As to quaternary structure, interacts with brc-2 and rad-51.

It localises to the nucleus. Its function is as follows. Has a role in the homologous recombination repair (HRR) of genomic DNA during meiosis. Required for rad-51 recruitment onto ssDNA gaps generated at stalled replication fork barriers. The chain is RAD51-like protein 1 (rfs-1) from Caenorhabditis elegans.